The following is a 158-amino-acid chain: Small ribosomal subunit protein uS15 (158 aa).

Residues 1–18 (MARMHARKRGKSGSKRPP) are compositionally biased toward basic residues. Residues 1 to 21 (MARMHARKRGKSGSKRPPRTA) are disordered.

The protein belongs to the universal ribosomal protein uS15 family. As to quaternary structure, part of the 30S ribosomal subunit.

The sequence is that of Small ribosomal subunit protein uS15 from Pyrococcus abyssi (strain GE5 / Orsay).